A 505-amino-acid polypeptide reads, in one-letter code: Megakaryocyte-associated tyrosine-protein kinase (505 aa).

Positions 46–108 constitute an SH3 domain; that stretch reads APGTQCMTKC…AAAALRHGEA (63 aa). The SH2 domain occupies 120 to 209; the sequence is WFHGKISGQE…AICTKLVKPR (90 aa). Residues 233–481 enclose the Protein kinase domain; sequence LTLGAQIGEG…IVEKLGRELR (249 aa). ATP contacts are provided by residues 239-247 and Lys-260; that span reads IGEGEFGAV. Residue Asp-350 is the Proton acceptor of the active site. The tract at residues 483–505 is disordered; it reads VGVSAPAGGQEAEGSAPTRSQDP.

Belongs to the protein kinase superfamily. Tyr protein kinase family. CSK subfamily. Interacts with KIT. Most abundant in brain, and to a lesser extent in the spleen, the thymus and the liver. Also found in the T-cell lineage.

It is found in the cytoplasm. The protein resides in the membrane. The enzyme catalyses L-tyrosyl-[protein] + ATP = O-phospho-L-tyrosyl-[protein] + ADP + H(+). Its function is as follows. Could play a significant role in the signal transduction of hematopoietic cells. May regulate tyrosine kinase activity of SRC-family members in brain by specifically phosphorylating their C-terminal regulatory tyrosine residue which acts as a negative regulatory site. It may play an inhibitory role in the control of T-cell proliferation. This is Megakaryocyte-associated tyrosine-protein kinase (Matk) from Mus musculus (Mouse).